An 86-amino-acid polypeptide reads, in one-letter code: DNA-directed RNA polymerase subunit Rpo6 (86 aa).

It belongs to the archaeal Rpo6/eukaryotic RPB6 RNA polymerase subunit family. As to quaternary structure, part of the RNA polymerase complex.

The protein localises to the cytoplasm. It carries out the reaction RNA(n) + a ribonucleoside 5'-triphosphate = RNA(n+1) + diphosphate. In terms of biological role, DNA-dependent RNA polymerase (RNAP) catalyzes the transcription of DNA into RNA using the four ribonucleoside triphosphates as substrates. This is DNA-directed RNA polymerase subunit Rpo6 from Sulfurisphaera tokodaii (strain DSM 16993 / JCM 10545 / NBRC 100140 / 7) (Sulfolobus tokodaii).